The following is a 270-amino-acid chain: Putative pyruvate, phosphate dikinase regulatory protein 2 (270 aa).

151–158 (GVSRTSKT) is an ADP binding site.

Belongs to the pyruvate, phosphate/water dikinase regulatory protein family. PDRP subfamily.

It carries out the reaction N(tele)-phospho-L-histidyl/L-threonyl-[pyruvate, phosphate dikinase] + ADP = N(tele)-phospho-L-histidyl/O-phospho-L-threonyl-[pyruvate, phosphate dikinase] + AMP + H(+). The enzyme catalyses N(tele)-phospho-L-histidyl/O-phospho-L-threonyl-[pyruvate, phosphate dikinase] + phosphate + H(+) = N(tele)-phospho-L-histidyl/L-threonyl-[pyruvate, phosphate dikinase] + diphosphate. Bifunctional serine/threonine kinase and phosphorylase involved in the regulation of the pyruvate, phosphate dikinase (PPDK) by catalyzing its phosphorylation/dephosphorylation. The chain is Putative pyruvate, phosphate dikinase regulatory protein 2 from Listeria innocua serovar 6a (strain ATCC BAA-680 / CLIP 11262).